Here is a 593-residue protein sequence, read N- to C-terminus: MRVSRLMLVTLRDVPAEAEITSHQLLLRGGFIRRVGSGIYAYLPMMWKVLQRITTIIREEMNRAGALETLLPQLHPSELWQRSGRWQGYTAGEGIMFHLEDRQGRELGLGPTHEEVITSLAGELLRSYRQLPVNLYQVQTKFRDEIRPRFGLMRGREFIMKDAYSFHADEADLQATYAVMDQAYRRIFERCGLEAVPVDADSGAIGGAASQEFMVTAEAGEDLILISDDGAYAANQEKAVSIPDAVASLPPAALTLLKTPGQTTIEGLCTAQAWQPGQLVKVLLLLAQLEDGQQQPVLVSLRGDQDLNEVKLVNAVSRRSEQGVLDCRPISPDDLQRQGINTIPFGFIGPDLADKVLADASSWTTSFLRLADTTATELEQFHCGANAEDQHRSHCSWGDLGGAPQGEDLRKARAGERCVHNPDARLQEKRGIEVGHIFQLGRKYSQALDCCFTNENGRDEPFWMGCYGIGVSRLAQAAVEQHHDDGGIRWPAAIAPYEVIVVIANNHDDAQTDLGDTVYATLLEAGIDVLLDDRKERAGVKFKDADLIGIPWRLVIGRDAAEGTVELVQRSNREMRKLPHGEAIGELLKALRP.

It belongs to the class-II aminoacyl-tRNA synthetase family. ProS type 1 subfamily. In terms of assembly, homodimer.

It is found in the cytoplasm. It catalyses the reaction tRNA(Pro) + L-proline + ATP = L-prolyl-tRNA(Pro) + AMP + diphosphate. In terms of biological role, catalyzes the attachment of proline to tRNA(Pro) in a two-step reaction: proline is first activated by ATP to form Pro-AMP and then transferred to the acceptor end of tRNA(Pro). As ProRS can inadvertently accommodate and process non-cognate amino acids such as alanine and cysteine, to avoid such errors it has two additional distinct editing activities against alanine. One activity is designated as 'pretransfer' editing and involves the tRNA(Pro)-independent hydrolysis of activated Ala-AMP. The other activity is designated 'posttransfer' editing and involves deacylation of mischarged Ala-tRNA(Pro). The misacylated Cys-tRNA(Pro) is not edited by ProRS. The sequence is that of Proline--tRNA ligase from Parasynechococcus marenigrum (strain WH8102).